A 211-amino-acid chain; its full sequence is Troponin I, cardiac muscle (211 aa).

The interval 1–24 (MADESSDAAGEPQPAPAPVRRRSS) is disordered. Alanine 2 carries the post-translational modification N-acetylalanine. Phosphoserine occurs at positions 5 and 6. Residues serine 23 and serine 24 each carry the phosphoserine; by PKA and PKD/PRKD1 modification. Tyrosine 27 carries the post-translational modification Phosphotyrosine. Threonine 32 carries the post-translational modification Phosphothreonine; by STK4/MST1. Residues 33–80 (EPHAKKKSKISASRKLQLKTLMLQIAKQEMEREAEERRGEKGRVLRTR) form an involved in binding TNC region. Serine 43 and serine 45 each carry phosphoserine; by PKC/PRKCE. Residue threonine 52 is modified to Phosphothreonine; by STK4/MST1. The residue at position 79 (threonine 79) is a Phosphothreonine. Threonine 130 and threonine 144 each carry phosphothreonine; by STK4/MST1. The segment at 130-151 (TQKIYDLRGKFKRPTLRRVRIS) is involved in binding TNC and actin. Phosphoserine occurs at positions 151, 167, and 200.

Belongs to the troponin I family. Interacts with TRIM63. Binds to actin and tropomyosin. Interacts with STK4/MST1. In terms of processing, phosphorylated at Ser-23 and Ser-24 by PRKD1; phosphorylation reduces myofilament calcium sensitivity. Phosphorylated preferentially at Thr-32. Phosphorylation by STK4/MST1 alters its binding affinity to TNNC1 (cardiac Tn-C) and TNNT2 (cardiac Tn-T). Phosphorylated at Ser-43 and Ser-45 by PRKCE; phosphorylation increases myocardium contractile dysfunction.

Its function is as follows. Troponin I is the inhibitory subunit of troponin, the thin filament regulatory complex which confers calcium-sensitivity to striated muscle actomyosin ATPase activity. This chain is Troponin I, cardiac muscle (Tnni3), found in Mus musculus (Mouse).